We begin with the raw amino-acid sequence, 297 residues long: Phosphoribosylaminoimidazole-succinocarboxamide synthase (297 aa).

Belongs to the SAICAR synthetase family.

The catalysed reaction is 5-amino-1-(5-phospho-D-ribosyl)imidazole-4-carboxylate + L-aspartate + ATP = (2S)-2-[5-amino-1-(5-phospho-beta-D-ribosyl)imidazole-4-carboxamido]succinate + ADP + phosphate + 2 H(+). It functions in the pathway purine metabolism; IMP biosynthesis via de novo pathway; 5-amino-1-(5-phospho-D-ribosyl)imidazole-4-carboxamide from 5-amino-1-(5-phospho-D-ribosyl)imidazole-4-carboxylate: step 1/2. The sequence is that of Phosphoribosylaminoimidazole-succinocarboxamide synthase from Methylococcus capsulatus (strain ATCC 33009 / NCIMB 11132 / Bath).